We begin with the raw amino-acid sequence, 425 residues long: MQLTPLHIQGGRELRGEIAVQGSKNAALPIIVASLLSSEKVTLHGIPRLSDVYTILDLVHHIGTQHQWVGPNSLELHTPSIVNTDAPYALVNKMRASFVVLGAILARAGQARVSMPGGCAWGPRPVDQHVKALRALGAEISEEGGNFHARRQGSLNGTFVFELLTVGGTHNAVLAAVLGDGVVTLENASIDTDVVDLIEFLNSLGADIQGAGTNTLVIRGVQQLRGGEYTVIPDRIEAGTFMMLAAATRSQLTVRNVRPDHLRAVSAKLQEMGVDILEAGNSLIVDARQRELRPVNVTTQSYPGFPTDVQPQMSALLATVPGTSVVQDPVYPDRLTHVAELHRMGANITVSGYTQVIQGSALHAAPVKAADLRAGAALFIAGLTCTGETVIDGVQYLNRGYENLAERLCGIGATAQQTELAVAMD.

Residue 24 to 25 (KN) coordinates phosphoenolpyruvate. Arg95 contacts UDP-N-acetyl-alpha-D-glucosamine. Cys119 functions as the Proton donor in the catalytic mechanism. Position 119 is a 2-(S-cysteinyl)pyruvic acid O-phosphothioketal (Cys119). Residues 124 to 128 (RPVDQ), Asp308, and Val330 contribute to the UDP-N-acetyl-alpha-D-glucosamine site.

The protein belongs to the EPSP synthase family. MurA subfamily.

It localises to the cytoplasm. It carries out the reaction phosphoenolpyruvate + UDP-N-acetyl-alpha-D-glucosamine = UDP-N-acetyl-3-O-(1-carboxyvinyl)-alpha-D-glucosamine + phosphate. Its pathway is cell wall biogenesis; peptidoglycan biosynthesis. In terms of biological role, cell wall formation. Adds enolpyruvyl to UDP-N-acetylglucosamine. The sequence is that of UDP-N-acetylglucosamine 1-carboxyvinyltransferase from Deinococcus deserti (strain DSM 17065 / CIP 109153 / LMG 22923 / VCD115).